Consider the following 487-residue polypeptide: Serine/threonine-protein kinase 4 (487 aa).

N-acetylmethionine is present on Met-1. At Thr-3 the chain carries Phosphothreonine. One can recognise a Protein kinase domain in the interval 30 to 281; the sequence is FDVLEKLGEG…ATQLLQHPFV (252 aa). ATP-binding positions include 36-44 and Lys-59; that span reads LGEGSYGSV. Residue Asp-149 is the Proton acceptor of the active site. Residue Thr-183 is modified to Phosphothreonine; by autocatalysis. At Ser-265 the chain carries Phosphoserine. Residues 289 to 311 adopt a coiled-coil conformation; sequence ILRDLINEAMDVKLKRQEAQQRE. The segment at 305-334 is disordered; that stretch reads QEAQQREVDQDDEENSEEDEMDSGTMVRAA. Residues 313 to 326 are compositionally biased toward acidic residues; that stretch reads DQDDEENSEEDEMD. Ser-320 carries the post-translational modification Phosphoserine. Phosphothreonine occurs at positions 340 and 367. At Thr-387 the chain carries Phosphothreonine; by PKB/AKT1. Ser-410 carries the post-translational modification Phosphoserine. A Phosphotyrosine modification is found at Tyr-433. The region spanning 433-480 is the SARAH domain; the sequence is YEFLKSWTVEDLQKRLLALDPMMEQEMEEIRQKYRSKRQPILDAIEAK.

It belongs to the protein kinase superfamily. STE Ser/Thr protein kinase family. STE20 subfamily. Homodimer; mediated via the coiled-coil region. Interacts with NORE1, which inhibits autoactivation. Interacts with and stabilizes SAV1. Interacts with RASSF1. Interacts with FOXO3. Interacts with RASSF2 (via SARAH domain). Interacts with AR, PKB/AKT1, TNNI3 and SIRT1. Interacts with MARK3 and SCRIB in the presence of DLG5. Interacts with DLG5 (via PDZ domain 3). The cofactor is Mg(2+). Autophosphorylated on serine and threonine residues. Phosphorylation at Thr-387 by PKB/AKT1, leads to inhibition of its: kinase activity, nuclear translocation and autophosphorylation at Thr-183. It also diminishes its cleavage by caspases and its ability to phosphorylate FOXO3. Post-translationally, proteolytically cleaved by caspase-3 during apoptosis at Asp-326 resulting in a 37 kDa form. Proteolytic cleavage results in kinase activation and nuclear translocation of the truncated form (MST1/N).

It localises to the cytoplasm. Its subcellular location is the nucleus. It catalyses the reaction L-seryl-[protein] + ATP = O-phospho-L-seryl-[protein] + ADP + H(+). The catalysed reaction is L-threonyl-[protein] + ATP = O-phospho-L-threonyl-[protein] + ADP + H(+). With respect to regulation, inhibited by the C-terminal non-catalytic region. Activated by caspase-cleavage. Full activation also requires homodimerization and autophosphorylation of Thr-183. Activated by RASSF1 which acts by preventing its dephosphorylation. In terms of biological role, stress-activated, pro-apoptotic kinase which, following caspase-cleavage, enters the nucleus and induces chromatin condensation followed by internucleosomal DNA fragmentation. Key component of the Hippo signaling pathway which plays a pivotal role in organ size control and tumor suppression by restricting proliferation and promoting apoptosis. The core of this pathway is composed of a kinase cascade wherein STK3/MST2 and STK4/MST1, in complex with its regulatory protein SAV1, phosphorylates and activates LATS1/2 in complex with its regulatory protein MOB1, which in turn phosphorylates and inactivates YAP1 oncoprotein and WWTR1/TAZ. Phosphorylation of YAP1 by LATS2 inhibits its translocation into the nucleus to regulate cellular genes important for cell proliferation, cell death, and cell migration. STK3/MST2 and STK4/MST1 are required to repress proliferation of mature hepatocytes, to prevent activation of facultative adult liver stem cells (oval cells), and to inhibit tumor formation. Phosphorylates 'Ser-14' of histone H2B (H2BS14ph) during apoptosis. Phosphorylates FOXO3 upon oxidative stress, which results in its nuclear translocation and cell death initiation. Phosphorylates MOBKL1A, MOBKL1B and RASSF2. Phosphorylates TNNI3 (cardiac Tn-I) and alters its binding affinity to TNNC1 (cardiac Tn-C) and TNNT2 (cardiac Tn-T). Phosphorylates FOXO1 on 'Ser-212' and regulates its activation and stimulates transcription of PMAIP1 in a FOXO1-dependent manner. Phosphorylates SIRT1 and inhibits SIRT1-mediated p53/TP53 deacetylation, thereby promoting p53/TP53 dependent transcription and apoptosis upon DNA damage. Acts as an inhibitor of PKB/AKT1. Phosphorylates AR on 'Ser-650' and suppresses its activity by intersecting with PKB/AKT1 signaling and antagonizing formation of AR-chromatin complexes. This chain is Serine/threonine-protein kinase 4 (Stk4), found in Mus musculus (Mouse).